The sequence spans 676 residues: Potassium-transporting ATPase ATP-binding subunit (676 aa).

Helical transmembrane passes span 24-44 (NPVM…CFYP), 45-65 (MGIP…TLLF), 212-232 (IFLI…VPFT), and 246-266 (SLVI…GALI). Asp302 acts as the 4-aspartylphosphate intermediate in catalysis. Residues Asp339, Glu343, 372–379 (FSAKTRMS), and Lys390 each bind ATP. 2 residues coordinate Mg(2+): Asp513 and Asp517. A run of 3 helical transmembrane segments spans residues 573–593 (FSIA…FYSI), 611–631 (AILS…PLAL), and 656–676 (GIIA…LIIL).

Belongs to the cation transport ATPase (P-type) (TC 3.A.3) family. Type IA subfamily. In terms of assembly, the system is composed of three essential subunits: KdpA, KdpB and KdpC.

The protein resides in the cell membrane. It carries out the reaction K(+)(out) + ATP + H2O = K(+)(in) + ADP + phosphate + H(+). In terms of biological role, part of the high-affinity ATP-driven potassium transport (or Kdp) system, which catalyzes the hydrolysis of ATP coupled with the electrogenic transport of potassium into the cytoplasm. This subunit is responsible for energy coupling to the transport system and for the release of the potassium ions to the cytoplasm. The polypeptide is Potassium-transporting ATPase ATP-binding subunit (Enterococcus faecalis (strain ATCC 700802 / V583)).